The chain runs to 319 residues: Cytochrome c biogenesis protein CcsA (319 aa).

7 helical membrane passes run 9–29 (ILTHISFSLVSIGITIFLITL), 44–64 (GVIGTFLCITGLLVTRWAYSG), 71–91 (LYESLLFLSWSFAIIHMFPYF), 143–163 (MVLGYAALLCGSLLSVALLVI), 225–245 (IISLGFIFLTIGILSGAVWAN), 259–273 (TWAFITWTMFAIYLH), and 286–306 (AIVAFLGFIIIWICYFGVNLL).

Belongs to the CcmF/CycK/Ccl1/NrfE/CcsA family. May interact with Ccs1.

It is found in the plastid. The protein localises to the chloroplast thylakoid membrane. Its function is as follows. Required during biogenesis of c-type cytochromes (cytochrome c6 and cytochrome f) at the step of heme attachment. The chain is Cytochrome c biogenesis protein CcsA from Oenothera biennis (German evening primrose).